A 219-amino-acid chain; its full sequence is Large ribosomal subunit protein uL3 (219 aa).

Belongs to the universal ribosomal protein uL3 family. As to quaternary structure, part of the 50S ribosomal subunit. Forms a cluster with proteins L14 and L19.

Its function is as follows. One of the primary rRNA binding proteins, it binds directly near the 3'-end of the 23S rRNA, where it nucleates assembly of the 50S subunit. This Salinispora arenicola (strain CNS-205) protein is Large ribosomal subunit protein uL3.